Here is a 588-residue protein sequence, read N- to C-terminus: Lamin-B1 (588 aa).

A compositionally biased stretch (polar residues) spans 1-12 (MATATPVQQQRA). Residues 1-34 (MATATPVQQQRAGSRASAPATPLSPTRLSRLQEK) are disordered. Ala2 bears the N-acetylalanine mark. A head region spans residues 2–35 (ATATPVQQQRAGSRASAPATPLSPTRLSRLQEKE). Phosphothreonine occurs at positions 3 and 5. Omega-N-methylarginine is present on Arg15. Ser17 bears the Phosphoserine mark. Thr21 is subject to Phosphothreonine. Ser24 is subject to Phosphoserine. Thr26 is modified (phosphothreonine). The residue at position 29 (Ser29) is a Phosphoserine. One can recognise an IF rod domain in the interval 33–389 (EKEELRELND…KLLEGEEERL (357 aa)). Residues 36–70 (ELRELNDRLAVYIDKVRSLETENSALQLQVTEREE) form a coil 1A region. Residues 71-82 (VRGRELTGLKAL) form a linker 1 region. A coil 1B region spans residues 83-216 (YETELADARR…EFRKNMYEEE (134 aa)). A Glycyl lysine isopeptide (Lys-Gly) (interchain with G-Cter in SUMO2) cross-link involves residue Lys103. Lys112 bears the N6-acetyllysine mark. Residue Lys124 forms a Glycyl lysine isopeptide (Lys-Gly) (interchain with G-Cter in SUMO2) linkage. The residue at position 127 (Ser127) is a Phosphoserine. Residue Lys146 forms a Glycyl lysine isopeptide (Lys-Gly) (interchain with G-Cter in SUMO2) linkage. The residue at position 158 (Lys158) is an N6-acetyllysine; alternate. Residue Lys158 forms a Glycyl lysine isopeptide (Lys-Gly) (interchain with G-Cter in SUMO2); alternate linkage. Residue Ser159 is modified to Phosphoserine. A Glycyl lysine isopeptide (Lys-Gly) (interchain with G-Cter in SUMO2) cross-link involves residue Lys182. Phosphoserine occurs at positions 201 and 233. Positions 217–244 (INETRRKHETRLVEVDSGRQIEYEYKLA) are linker 2. Residues Lys242 and Lys262 each participate in a glycyl lysine isopeptide (Lys-Gly) (interchain with G-Cter in SUMO2) cross-link. The interval 245-387 (QALHEMREQH…YRKLLEGEEE (143 aa)) is coil 2. The residue at position 272 (Lys272) is an N6-acetyllysine; alternate. Lys272 is covalently cross-linked (Glycyl lysine isopeptide (Lys-Gly) (interchain with G-Cter in SUMO2); alternate). A phosphoserine mark is found at Ser279 and Ser303. A Glycyl lysine isopeptide (Lys-Gly) (interchain with G-Cter in SUMO2) cross-link involves residue Lys313. Lys331 bears the N6-acetyllysine; alternate mark. Lys331 is covalently cross-linked (Glycyl lysine isopeptide (Lys-Gly) (interchain with G-Cter in SUMO2); alternate). A phosphoserine mark is found at Ser376 and Ser394. Residues 388–588 (RLKLSPSPSS…RASNKSCAIM (201 aa)) are tail. Low complexity predominate over residues 391–410 (LSPSPSSRVTVSRASSSRSV). Positions 391 to 433 (LSPSPSSRVTVSRASSSRSVRTTRGKRKRVDVEESEASSSVSI) are disordered. O-linked (GlcNAc) threonine glycosylation occurs at Thr400. Arg414 carries the omega-N-methylarginine modification. The Nuclear localization signal motif lies at 416-421 (KRKRVD). The 117-residue stretch at 431 to 547 (VSISHSASAT…EEVAQRSTVF (117 aa)) folds into the LTD domain. Lys484 carries the N6-acetyllysine modification. A Glycyl lysine isopeptide (Lys-Gly) (interchain with G-Cter in SUMO2) cross-link involves residue Lys533. Ser535 is subject to Phosphoserine. Residue Lys548 forms a Glycyl lysine isopeptide (Lys-Gly) (interchain with G-Cter in SUMO2) linkage. Residue Cys585 is modified to Cysteine methyl ester. The S-farnesyl cysteine moiety is linked to residue Cys585. Residues 586 to 588 (AIM) constitute a propeptide, removed in mature form.

It belongs to the intermediate filament family. In terms of assembly, homodimer. Lamin dimers then assemble into dimeric head-to-tail polymers. Ultimately, two head-to-tail polymers assemble laterally into a protofilament with a uniformly shaped rod of 3.5 nm in diameter. Interacts with SPAG4 and SEPT12. Post-translationally, B-type lamins undergo a series of modifications, such as farnesylation and phosphorylation. Increased phosphorylation of the lamins occurs before envelope disintegration and probably plays a role in regulating lamin associations. In terms of processing, phosphorylation plays a key role in lamin organization, subcellular localization and nuclear envelope disintegration. Phosphorylation by CDK1 at Ser-24 and Ser-394 at the onset of mitosis drives lamin disassembly and nuclear envelope breakdown.

It is found in the nucleus lamina. Its function is as follows. Lamins are intermediate filament proteins that assemble into a filamentous meshwork, and which constitute the major components of the nuclear lamina, a fibrous layer on the nucleoplasmic side of the inner nuclear membrane. Lamins provide a framework for the nuclear envelope, bridging the nuclear envelope and chromatin, thereby playing an important role in nuclear assembly, chromatin organization, nuclear membrane and telomere dynamics. The structural integrity of the lamina is strictly controlled by the cell cycle, as seen by the disintegration and formation of the nuclear envelope in prophase and telophase, respectively. In Mus musculus (Mouse), this protein is Lamin-B1 (Lmnb1).